Here is a 572-residue protein sequence, read N- to C-terminus: Urease subunit alpha (572 aa).

One can recognise a Urease domain in the interval 134–572; that stretch reads GGIDAHVHFI…LPMAQRYFLF (439 aa). The Ni(2+) site is built by His139, His141, and Lys222. An N6-carboxylysine modification is found at Lys222. His224 contacts substrate. The Ni(2+) site is built by His251 and His277. The Proton donor role is filled by His325. Asp365 contributes to the Ni(2+) binding site.

Belongs to the metallo-dependent hydrolases superfamily. Urease alpha subunit family. As to quaternary structure, heterotrimer of UreA (gamma), UreB (beta) and UreC (alpha) subunits. Three heterotrimers associate to form the active enzyme. Requires Ni cation as cofactor. In terms of processing, carboxylation allows a single lysine to coordinate two nickel ions.

The protein resides in the cytoplasm. It catalyses the reaction urea + 2 H2O + H(+) = hydrogencarbonate + 2 NH4(+). It functions in the pathway nitrogen metabolism; urea degradation; CO(2) and NH(3) from urea (urease route): step 1/1. The polypeptide is Urease subunit alpha (Synechococcus sp. (strain JA-2-3B'a(2-13)) (Cyanobacteria bacterium Yellowstone B-Prime)).